A 545-amino-acid chain; its full sequence is Glutamine-dependent NAD(+) synthetase (545 aa).

The CN hydrolase domain occupies 5–247 (LRIAMAQFDF…DQWLVVDYMR (243 aa)). Residue Glu46 is the Proton acceptor; for glutaminase activity of the active site. Lys113 serves as the catalytic For glutaminase activity. Tyr119 lines the L-glutamine pocket. Cys151 functions as the Nucleophile; for glutaminase activity in the catalytic mechanism. Residues Ser177 and Lys183 each contribute to the L-glutamine site. The ligase stretch occupies residues 269-545 (VWRAVVRGVQ…RYPISNAYRG (277 aa)). ATP is bound at residue 292 to 299 (GLSGGIDS). Deamido-NAD(+) is bound at residue Asn375. Residue Thr399 coordinates ATP. 2 residues coordinate deamido-NAD(+): Glu404 and Lys516.

This sequence in the C-terminal section; belongs to the NAD synthetase family.

The catalysed reaction is deamido-NAD(+) + L-glutamine + ATP + H2O = L-glutamate + AMP + diphosphate + NAD(+) + H(+). It participates in cofactor biosynthesis; NAD(+) biosynthesis; NAD(+) from deamido-NAD(+) (L-Gln route): step 1/1. Functionally, catalyzes the ATP-dependent amidation of deamido-NAD to form NAD. Uses L-glutamine as a nitrogen source. The polypeptide is Glutamine-dependent NAD(+) synthetase (Xylella fastidiosa (strain 9a5c)).